The following is a 950-amino-acid chain: Defective chorion protein, FC106 isoform (950 aa).

Residues 1–19 (MRLFSLLPLLALLVVQAAG) form the signal peptide. 3 disordered regions span residues 23-60 (VTSD…PSIN), 184-212 (APAP…PDAP), and 268-294 (PAQP…EDPY). Residues 32-41 (AGSTTNSTTD) show a composition bias toward polar residues. The span at 268 to 280 (PAQPAAAGTDAQA) shows a compositional bias: low complexity. A run of 5 repeats spans residues 493–518 (QNPM…QQIQ), 519–544 (QNPM…QQIQ), 545–570 (QNPM…QQIQ), 571–596 (QNPM…QQIQ), and 597–622 (QNPM…QQIQ). Residues 493 to 788 (QNPMMMQQRQ…IQQQQRQMMQ (296 aa)) form a 12 X 26 AA approximate tandem repeats, Glu, Met-rich region. Residues 623 to 652 (QNPMMMQQRQWSEEQAKIQHDQQMAQQMAQ) form a 6; approximate repeat. One copy of the 7; approximate repeat lies at 653–680 (QGLMMTEQRQRQWSEDQAKIQQAQQMAQ). One copy of the 8; approximate repeat lies at 681-696 (QTPMMMPQMQQRQWTE). A 9; approximate repeat occupies 697–720 (DPQMVQQMQQRQWAEDQTRMQMAQ). One copy of the 10; approximate repeat lies at 721–733 (QNPMMQQQRQMAE). Residues 734-758 (NPQMMQQRQWSEEQTKIEQAQQMAQ) form an 11; approximate repeat. The stretch at 759-788 (QNQMMMQQMQQRQWSEDQAQIQQQQRQMMQ) is one 12; approximate repeat. A disordered region spans residues 843–875 (GPQMPENEGTARHKVDALGVGGNKRKKSKSKSA).

Post-translationally, proteolytic cleavage of isoform FC106 generates 2 further products, S80 and S60.

The protein resides in the secreted. In terms of biological role, required for proper assembly of the eggshell. The polypeptide is Defective chorion protein, FC106 isoform (Drosophila melanogaster (Fruit fly)).